A 229-amino-acid polypeptide reads, in one-letter code: GTP cyclohydrolase 1 (229 aa).

The segment at 1-26 (MDAKIKPLRGGKPADARPEFQPAELD) is disordered. Positions 118, 121, and 189 each coordinate Zn(2+).

It belongs to the GTP cyclohydrolase I family. As to quaternary structure, toroid-shaped homodecamer, composed of two pentamers of five dimers.

It carries out the reaction GTP + H2O = 7,8-dihydroneopterin 3'-triphosphate + formate + H(+). It participates in cofactor biosynthesis; 7,8-dihydroneopterin triphosphate biosynthesis; 7,8-dihydroneopterin triphosphate from GTP: step 1/1. This chain is GTP cyclohydrolase 1, found in Rhodopseudomonas palustris (strain BisB5).